A 386-amino-acid polypeptide reads, in one-letter code: MGILGLSKLIADLAPQAIRESEMKHFFGRKVAIDASMCLYQFLIAVRSEGAQLATVNGDPTSHLMGMFYRTIRLLDNGIKPVYVFDGKPPDLKSGELAKRAERREEAEKALKAATDAGDDAEIEKFNRRLVRVTKEHAREAKELLSLMGVPYVDAPCEAEAQCAALVKAGKVYATATEDMDALTFGSTKLLRYLTYSEARKMPVKEFSYDKLLEGLEVNNREFIDLCILLGCDYCESIKGIGPKRAIELINNYRDIETILDNLDTSKYTVPENWNYKVARELFIEPEVADASAIDLKWTEPDEEGLVKFLCGDRQFSEERVRNGAKKLLKSKHAQTQVRLDSFFKTLPSTPNAVHAAKRKAEEAKKSANNKKAKTSGGAARGRRPK.

The interval 1 to 104 is N-domain; sequence MGILGLSKLI…GELAKRAERR (104 aa). Residue Asp-34 coordinates Mg(2+). 2 residues coordinate DNA: Arg-47 and Arg-70. Residues Asp-86, Glu-158, Glu-160, Asp-179, and Asp-181 each coordinate Mg(2+). Residues 122-253 are I-domain; it reads EIEKFNRRLV…KRAIELINNY (132 aa). Glu-158 is a binding site for DNA. Positions 231 and 233 each coordinate DNA. Residue Asp-233 coordinates Mg(2+). An interaction with PCNA region spans residues 336–344; the sequence is TQVRLDSFF. The segment at 351 to 386 is disordered; sequence PNAVHAAKRKAEEAKKSANNKKAKTSGGAARGRRPK.

This sequence belongs to the XPG/RAD2 endonuclease family. FEN1 subfamily. As to quaternary structure, interacts with PCNA. Three molecules of FEN1 bind to one PCNA trimer with each molecule binding to one PCNA monomer. PCNA stimulates the nuclease activity without altering cleavage specificity. It depends on Mg(2+) as a cofactor. Post-translationally, phosphorylated. Phosphorylation upon DNA damage induces relocalization to the nuclear plasma.

Its subcellular location is the nucleus. The protein localises to the nucleolus. It localises to the nucleoplasm. The protein resides in the mitochondrion. Functionally, structure-specific nuclease with 5'-flap endonuclease and 5'-3' exonuclease activities involved in DNA replication and repair. During DNA replication, cleaves the 5'-overhanging flap structure that is generated by displacement synthesis when DNA polymerase encounters the 5'-end of a downstream Okazaki fragment. It enters the flap from the 5'-end and then tracks to cleave the flap base, leaving a nick for ligation. Also involved in the long patch base excision repair (LP-BER) pathway, by cleaving within the apurinic/apyrimidinic (AP) site-terminated flap. Acts as a genome stabilization factor that prevents flaps from equilibrating into structures that lead to duplications and deletions. Also possesses 5'-3' exonuclease activity on nicked or gapped double-stranded DNA, and exhibits RNase H activity. Also involved in replication and repair of rDNA and in repairing mitochondrial DNA. In Drosophila persimilis (Fruit fly), this protein is Flap endonuclease 1.